We begin with the raw amino-acid sequence, 163 residues long: Transcriptional repressor NrdR (163 aa).

The segment at 1 to 22 (MRCPKCQSLKSSVIDSRQAEDG) is disordered. The segment at 3-34 (CPKCQSLKSSVIDSRQAEDGNTIRRRRSCDQC) is a zinc-finger region. The ATP-cone domain maps to 49-139 (LVVVKKDGTR…VYRSFKDVGE (91 aa)).

It belongs to the NrdR family. Zn(2+) serves as cofactor.

Negatively regulates transcription of bacterial ribonucleotide reductase nrd genes and operons by binding to NrdR-boxes. The polypeptide is Transcriptional repressor NrdR (Streptococcus suis (strain 98HAH33)).